Reading from the N-terminus, the 522-residue chain is Putative glucosylceramidase 3 (522 aa).

Positions 1–21 (MSRWKVVILCLLSFMFEIGHA) are cleaved as a signal peptide. The active-site Proton donor is the glutamate 259. Glutamate 364 serves as the catalytic Nucleophile.

The protein belongs to the glycosyl hydrolase 30 family.

The catalysed reaction is a beta-D-glucosylceramide + H2O = an N-acyl-sphingoid base + D-glucose. It catalyses the reaction a beta-D-glucosyl-(1&lt;-&gt;1')-N-acylsphing-4-enine + H2O = an N-acylsphing-4-enine + D-glucose. It carries out the reaction an N-acyl-1-beta-D-glucosyl-15-methylhexadecasphing-4-enine + H2O = an N-acyl-15-methylhexadecasphing-4-enine + D-glucose. It participates in lipid metabolism; sphingolipid metabolism. Its function is as follows. Glucosylceramidase that catalyzes the hydrolysis of glucosylceramides into free ceramides and glucose. C.elegans contain specific sphingoid bases, which are unique or different in structure compared to the sphingoid bases found in other animals. Two examples of these distinctive compounds are: 15-methylhexadecasphinganine and 15-methylhexadecasphing-4-enine. This is Putative glucosylceramidase 3 from Caenorhabditis elegans.